An 89-amino-acid chain; its full sequence is Small ribosomal subunit protein uS19 (89 aa).

This sequence belongs to the universal ribosomal protein uS19 family.

Its function is as follows. Protein S19 forms a complex with S13 that binds strongly to the 16S ribosomal RNA. In Xylella fastidiosa (strain 9a5c), this protein is Small ribosomal subunit protein uS19.